The primary structure comprises 372 residues: 4-hydroxy-3-methylbut-2-en-1-yl diphosphate synthase (flavodoxin) (372 aa).

C270, C273, C305, and E312 together coordinate [4Fe-4S] cluster.

The protein belongs to the IspG family. The cofactor is [4Fe-4S] cluster.

The catalysed reaction is (2E)-4-hydroxy-3-methylbut-2-enyl diphosphate + oxidized [flavodoxin] + H2O + 2 H(+) = 2-C-methyl-D-erythritol 2,4-cyclic diphosphate + reduced [flavodoxin]. The protein operates within isoprenoid biosynthesis; isopentenyl diphosphate biosynthesis via DXP pathway; isopentenyl diphosphate from 1-deoxy-D-xylulose 5-phosphate: step 5/6. Functionally, converts 2C-methyl-D-erythritol 2,4-cyclodiphosphate (ME-2,4cPP) into 1-hydroxy-2-methyl-2-(E)-butenyl 4-diphosphate. This is 4-hydroxy-3-methylbut-2-en-1-yl diphosphate synthase (flavodoxin) from Shigella boydii serotype 18 (strain CDC 3083-94 / BS512).